The chain runs to 421 residues: 2',3'-cyclic-nucleotide 3'-phosphodiesterase (421 aa).

Residues S6 and S9 each carry the phosphoserine modification. Y110 is subject to Phosphotyrosine. At S170 the chain carries Phosphoserine. The active-site Proton acceptor is the H251. T253 lines the substrate pocket. H330 acts as the Proton donor in catalysis. T332 contacts substrate. S359 bears the Phosphoserine mark. The residue at position 418 (C418) is a Cysteine methyl ester. Residue C418 is the site of S-farnesyl cysteine attachment. Positions 419-421 (TII) are cleaved as a propeptide — removed in mature form.

It belongs to the 2H phosphoesterase superfamily. CNPase family. In terms of assembly, exists as monomers and homodimers.

It is found in the membrane. The protein resides in the melanosome. It catalyses the reaction a nucleoside 2',3'-cyclic phosphate + H2O = a nucleoside 2'-phosphate + H(+). Catalyzes the formation of 2'-nucleotide products from 2',3'-cyclic substrates. May participate in RNA metabolism in the myelinating cell, CNP is the third most abundant protein in central nervous system myelin. In Pongo abelii (Sumatran orangutan), this protein is 2',3'-cyclic-nucleotide 3'-phosphodiesterase.